A 70-amino-acid polypeptide reads, in one-letter code: Protein SlyX homolog (70 aa).

The protein belongs to the SlyX family.

In Shewanella oneidensis (strain ATCC 700550 / JCM 31522 / CIP 106686 / LMG 19005 / NCIMB 14063 / MR-1), this protein is Protein SlyX homolog.